An 85-amino-acid chain; its full sequence is Protein RnfH (85 aa).

It belongs to the UPF0125 (RnfH) family.

The chain is Protein RnfH from Cereibacter sphaeroides (strain ATCC 17023 / DSM 158 / JCM 6121 / CCUG 31486 / LMG 2827 / NBRC 12203 / NCIMB 8253 / ATH 2.4.1.) (Rhodobacter sphaeroides).